Reading from the N-terminus, the 633-residue chain is Bifunctional enzyme CysN/CysC (633 aa).

Residues 1-463 form a sulfate adenylyltransferase region; it reads MSHQSDLISE…REERAGRFGQ (463 aa). Residues 22–241 form the tr-type G domain; the sequence is KELLRFLTCG…TVEIAADRNL (220 aa). A G1 region spans residues 31 to 38; it reads GNVDDGKS. Residue 31 to 38 participates in GTP binding; sequence GNVDDGKS. The tract at residues 89 to 93 is G2; sequence GITID. A G3 region spans residues 110 to 113; the sequence is DTPG. GTP-binding positions include 110 to 114 and 165 to 168; these read DTPGH and NKMD. The G4 stretch occupies residues 165 to 168; sequence NKMD. A G5 region spans residues 204–206; the sequence is SAL. Residues 464–633 form an adenylyl-sulfate kinase region; that stretch reads QPATVLFSGL…LDLLRERQAI (170 aa). 472 to 479 provides a ligand contact to ATP; the sequence is GLSGAGKS.

This sequence in the C-terminal section; belongs to the APS kinase family. The protein in the N-terminal section; belongs to the TRAFAC class translation factor GTPase superfamily. Classic translation factor GTPase family. CysN/NodQ subfamily. As to quaternary structure, heterodimer composed of CysD, the smaller subunit, and CysNC.

It catalyses the reaction sulfate + ATP + H(+) = adenosine 5'-phosphosulfate + diphosphate. It carries out the reaction adenosine 5'-phosphosulfate + ATP = 3'-phosphoadenylyl sulfate + ADP + H(+). It participates in sulfur metabolism; hydrogen sulfide biosynthesis; sulfite from sulfate: step 1/3. The protein operates within sulfur metabolism; hydrogen sulfide biosynthesis; sulfite from sulfate: step 2/3. In terms of biological role, with CysD forms the ATP sulfurylase (ATPS) that catalyzes the adenylation of sulfate producing adenosine 5'-phosphosulfate (APS) and diphosphate, the first enzymatic step in sulfur assimilation pathway. APS synthesis involves the formation of a high-energy phosphoric-sulfuric acid anhydride bond driven by GTP hydrolysis by CysN coupled to ATP hydrolysis by CysD. Functionally, APS kinase catalyzes the synthesis of activated sulfate. In Pseudomonas aeruginosa (strain ATCC 15692 / DSM 22644 / CIP 104116 / JCM 14847 / LMG 12228 / 1C / PRS 101 / PAO1), this protein is Bifunctional enzyme CysN/CysC (cysNC).